A 327-amino-acid polypeptide reads, in one-letter code: MEGSNGFGIDSILSHRAGSPALPKGDPLLGDCRSPLELSPRSESSSDCSSPASPGRDCLETGTPRPGGASGPGLDSHLQPGQLSAPAQSRTVTSSFLIRDILADCKPLAACAPYSSSGQPAAPEPGGRLAAKAAEDFRDKLDKSGSNASSDSEYKVKEEGDREISSSRDSPPVRLKKPRKARTAFTDHQLAQLERSFERQKYLSVQDRMELAASLNLTDTQVKTWYQNRRTKWKRQTAVGLELLAEAGNYSALQRMFPSPYFYPQSLVSNLDPGAALYLYRGPSAPPPALQRPLVPRILIHGLQGASEPPPPLPPLAGVLPRAAQPR.

Disordered stretches follow at residues 1–90, 112–184, and 305–327; these read MEGS…AQSR, APYS…ARTA, and GASE…AQPR. Over residues 33-54 the composition is skewed to low complexity; sequence RSPLELSPRSESSSDCSSPASP. Residues 79–90 show a composition bias toward polar residues; that stretch reads QPGQLSAPAQSR. 2 stretches are compositionally biased toward basic and acidic residues: residues 133-143 and 152-166; these read AAEDFRDKLDK and SEYK…EISS. A DNA-binding region (homeobox) is located at residues 178–237; it reads PRKARTAFTDHQLAQLERSFERQKYLSVQDRMELAASLNLTDTQVKTWYQNRRTKWKRQT. Residues 316 to 327 are compositionally biased toward low complexity; sequence LAGVLPRAAQPR.

This sequence belongs to the BAR homeobox family.

The protein localises to the nucleus. The protein is BarH-like 1 homeobox protein (BARHL1) of Homo sapiens (Human).